The chain runs to 125 residues: MADLNKLAEDIVGLTLLEAQELKTILKDKYGIEPAAGGAVMMAGPAAGAAAPAEEEKTEFDVVLTDAGANKINVIKEVRAITGLGLKEAKDLVEAGGKVKEAVAKADAEAMKKKLEEAGAKVELK.

The protein belongs to the bacterial ribosomal protein bL12 family. Homodimer. Part of the ribosomal stalk of the 50S ribosomal subunit. Forms a multimeric L10(L12)X complex, where L10 forms an elongated spine to which 2 to 4 L12 dimers bind in a sequential fashion. Binds GTP-bound translation factors.

Its function is as follows. Forms part of the ribosomal stalk which helps the ribosome interact with GTP-bound translation factors. Is thus essential for accurate translation. The polypeptide is Large ribosomal subunit protein bL12 (Cereibacter sphaeroides (strain ATCC 17023 / DSM 158 / JCM 6121 / CCUG 31486 / LMG 2827 / NBRC 12203 / NCIMB 8253 / ATH 2.4.1.) (Rhodobacter sphaeroides)).